The sequence spans 1096 residues: Cohesin subunit scc-3 (1096 aa).

The span at 1-21 shows a compositional bias: polar residues; it reads MSETPTDQSPQRMSTRNQARV. Disordered regions lie at residues 1 to 53 and 67 to 106; these read MSET…KKRA and NLNN…ESAE. Residues 261-312 are a coiled coil; the sequence is IELTQSKEKTSKQIEAEKAKLKNNSAGNEKYEALVAQRTQTEERAEEIRQII. Residues 320-405 enclose the SCD domain; that stretch reads FVHRYRDVVP…NKFKDRLVSM (86 aa). The disordered stretch occupies residues 1057-1096; it reads DNMSVRSGMTVTSNATMRSTASSTRGRGRGRGRSRIADDF. The span at 1060–1073 shows a compositional bias: polar residues; that stretch reads SVRSGMTVTSNATM.

It belongs to the SCC3 family. As to quaternary structure, component of the cohesin complex, composed of the smc-1 and smc-3 heterodimer attached via their hinge domain, scc-1 which links them, and scc-3. Interacts with scc-1, smc-1 and tim-1. In terms of tissue distribution, expressed in gonadal cells.

The protein localises to the nucleus. The protein resides in the chromosome. Its function is as follows. Component of the cohesin complex, a complex required for the cohesion of sister chromatids after DNA replication. The cohesin complex apparently forms a large proteinaceous ring within which sister chromatids can be trapped. At anaphase, the scc-1 subunit of the complex is cleaved and dissociates from chromatin, allowing sister chromatids to segregate. The cohesin complex may also play a role in spindle pole assembly during mitosis. Plays an essential role in cell division during embryonic development. Required for the assembly of the synaptonemal complex between homologous chromosomes to promote sister chromatid cohesion during mitosis and meiosis. Has a role in stabilization of homologous chromosome associations during meiotic synapsis. Required for chromosome segregation during mitosis and meiosis. Plays a role in DNA double-strand break (DSB) repair during meiotic recombination and promotes the assembly of the 9-1-1 cell-cycle checkpoint response complex which is required for inducing apoptosis in response to DNA damage, at DNA damage sites. The polypeptide is Cohesin subunit scc-3 (Caenorhabditis elegans).